Consider the following 120-residue polypeptide: Large ribosomal subunit protein uL18 (120 aa).

Belongs to the universal ribosomal protein uL18 family. In terms of assembly, part of the 50S ribosomal subunit; part of the 5S rRNA/L5/L18/L25 subcomplex. Contacts the 5S and 23S rRNAs.

This is one of the proteins that bind and probably mediate the attachment of the 5S RNA into the large ribosomal subunit, where it forms part of the central protuberance. This chain is Large ribosomal subunit protein uL18, found in Bartonella henselae (strain ATCC 49882 / DSM 28221 / CCUG 30454 / Houston 1) (Rochalimaea henselae).